A 43-amino-acid polypeptide reads, in one-letter code: Pre-protein VI (43 aa).

The propeptide occupies 1–33; it reads MEGINFSALAPRYGSRPMLSSWSDIGTSSMNGG.

This sequence belongs to the adenoviridae protein VI family. In terms of assembly, interacts with hexon protein; this interaction allows nuclear import of hexon trimers and possibly pre-capsid assembly. Interacts (via C-terminal NLS) with importin alpha/beta. As to quaternary structure, interacts (via PPxY motif) with host NEDD4 ubiquitine ligase; this interaction might play a role in virus intracellular transport during entry. Part of a complex composed of the core-capsid bridging protein, the endosome lysis protein VI and the hexon-linking protein VIII; these interactions bridge the virus core to the capsid. Interacts with peripentonal hexons; this interaction stabilizes the capsid by gluing two peripentonal hexons together and joining them with an adjacent group-of-nine hexon. Protease cofactor: Heterodimer with the viral protease; disulfide-linked. Interacts with the viral protease. In terms of processing, ubiquitinated by Nedd4 following partial capsid disassembly; which might play a role in intracellular virus movement during entry. Post-translationally, protease cofactor: Contains the major nuclear import and export signals. Proteolytically removed during virion maturation. The processing of the C-terminus turns the precursor into a mature viral structural protein and abrogates its ability to promote hexon import and act as a potential chaperone protein.

It is found in the host nucleus. It localises to the host cytoplasm. The protein resides in the virion. During virus assembly, promotes hexon trimers nuclear import through nuclear pore complexes via an importin alpha/beta-dependent mechanism. By analogy to herpesviruses capsid assembly, might act as a chaperone to promote the formation of the icosahedral capsid. In terms of biological role, structural component of the virion that provides increased stability to the particle shell through its interaction with the core-capsid bridging protein and the hexon-linking protein VIII. Fibers shedding during virus entry into host cell allows the endosome lysis protein to be exposed as a membrane-lytic peptide. Exhibits pH-independent membrane fragmentation activity and probably mediates viral rapid escape from host endosome via organellar membrane lysis. It is not clear if it then remains partially associated with the capsid and involved in the intracellular microtubule-dependent transport of capsid to the nucleus, or if it is lost during endosomal penetration. This Bovine adenovirus 2 (BAdV-2) protein is Pre-protein VI.